A 250-amino-acid polypeptide reads, in one-letter code: Probable E3 ubiquitin-protein ligase RHY1A (250 aa).

Polar residues predominate over residues 1 to 10 (MTSASELFST). A disordered region spans residues 1–106 (MTSASELFST…ETQSSSFVNL (106 aa)). Over residues 29–47 (YRHHSHHHHRRHGVHHHNQ) the composition is skewed to basic residues. Residues 48 to 58 (RHDSDGCDPLR) are compositionally biased toward basic and acidic residues. The span at 60–69 (PTPRLRRFFH) shows a compositional bias: basic residues. Residues 71-80 (PIQERSRPIR) show a composition bias toward basic and acidic residues. Residues 91 to 102 (TDSTDTETQSSS) are compositionally biased toward low complexity. The RING-type; atypical zinc-finger motif lies at 203 to 244 (CSICLESFTKGDMLISLPCTHSFHSSCLNPWLRACGDCPCCR).

The enzyme catalyses S-ubiquitinyl-[E2 ubiquitin-conjugating enzyme]-L-cysteine + [acceptor protein]-L-lysine = [E2 ubiquitin-conjugating enzyme]-L-cysteine + N(6)-ubiquitinyl-[acceptor protein]-L-lysine.. It participates in protein modification; protein ubiquitination. In terms of biological role, probable E3 ubiquitin-protein ligase that may possess E3 ubiquitin ligase activity in vitro. The sequence is that of Probable E3 ubiquitin-protein ligase RHY1A from Arabidopsis thaliana (Mouse-ear cress).